The following is a 144-amino-acid chain: Large ribosomal subunit protein uL13 (144 aa).

Belongs to the universal ribosomal protein uL13 family. Part of the 50S ribosomal subunit.

This protein is one of the early assembly proteins of the 50S ribosomal subunit, although it is not seen to bind rRNA by itself. It is important during the early stages of 50S assembly. In Clostridium tetani (strain Massachusetts / E88), this protein is Large ribosomal subunit protein uL13.